A 313-amino-acid polypeptide reads, in one-letter code: MASDGTDVVALYGGANGLSHKSGSFSVKVGLAQMLRGGVIMDVVTPEQARIAEEAGACAVMALERVPADIRAQGGVARMSDPGLIRDIKRSVTIPVMAKARIGHLVEAQILEAIGVDYVDESEVLTLADDAHHINKNNFRVPFVCGCRDLGEALRRIREGAAMIRTKGEAGTGNVVEAVRHVRSVMGDIRALRSMDDDEVFSYAKRIAAPYDLVMQTKQLGRLPVVQFAAGGVATPADAALMMQLGCDGVFVGSGIFKSGDPALRARAIVQAVTHYSDPKILAEVSSGLGEAMVGINLSDPKIHVERFAARSD.

Residue aspartate 42 participates in D-ribose 5-phosphate binding. Lysine 99 functions as the Schiff-base intermediate with D-ribose 5-phosphate in the catalytic mechanism. A D-ribose 5-phosphate-binding site is contributed by glycine 171. Arginine 183 contributes to the D-glyceraldehyde 3-phosphate binding site. Residues glycine 232 and 253 to 254 (GS) each bind D-ribose 5-phosphate.

The protein belongs to the PdxS/SNZ family.

The enzyme catalyses aldehydo-D-ribose 5-phosphate + D-glyceraldehyde 3-phosphate + L-glutamine = pyridoxal 5'-phosphate + L-glutamate + phosphate + 3 H2O + H(+). Its pathway is cofactor biosynthesis; pyridoxal 5'-phosphate biosynthesis. Its function is as follows. Catalyzes the formation of pyridoxal 5'-phosphate from ribose 5-phosphate (RBP), glyceraldehyde 3-phosphate (G3P) and ammonia. The ammonia is provided by PDX2. Can also use ribulose 5-phosphate and dihydroxyacetone phosphate as substrates, resulting from enzyme-catalyzed isomerization of RBP and G3P, respectively. Also plays an indirect role in resistance to singlet oxygen-generating photosensitizers. The chain is Probable pyridoxal 5'-phosphate synthase subunit PDX1.2 (PDX12) from Oryza sativa subsp. japonica (Rice).